A 244-amino-acid polypeptide reads, in one-letter code: Octanoyltransferase (244 aa).

The segment at 1 to 21 (MDKKLHSVSPESGPNSNLDLT) is disordered. The span at 9-21 (SPESGPNSNLDLT) shows a compositional bias: polar residues. Residues 59 to 244 (PFSPQAVWLL…LNWEKINQSL (186 aa)) form the BPL/LPL catalytic domain. Substrate-binding positions include 101–108 (RGGEVTHH), 168–170 (SIG), and 181–183 (GFS). Catalysis depends on C199, which acts as the Acyl-thioester intermediate.

It belongs to the LipB family.

It is found in the cytoplasm. It carries out the reaction octanoyl-[ACP] + L-lysyl-[protein] = N(6)-octanoyl-L-lysyl-[protein] + holo-[ACP] + H(+). It functions in the pathway protein modification; protein lipoylation via endogenous pathway; protein N(6)-(lipoyl)lysine from octanoyl-[acyl-carrier-protein]: step 1/2. Its function is as follows. Catalyzes the transfer of endogenously produced octanoic acid from octanoyl-acyl-carrier-protein onto the lipoyl domains of lipoate-dependent enzymes. Lipoyl-ACP can also act as a substrate although octanoyl-ACP is likely to be the physiological substrate. This Prochlorococcus marinus (strain NATL1A) protein is Octanoyltransferase.